A 169-amino-acid polypeptide reads, in one-letter code: MLASRALSLIGKRAISTSVCLRAHGSVVKSEDYAFPTYADRRDYPLPDVAHVTMLSASQKALKEKEKADWSSLSRDEKVQLYRIQFNESFAEMNRGTNEWKTVVGMAMFFIGFTALVLIWEKSYVYGPIPHTFDRDWVAMQTKRMLDMKANPIQGFSAKWDYDKNEWKK.

The transit peptide at 1–22 directs the protein to the mitochondrion; that stretch reads MLASRALSLIGKRAISTSVCLR. Topologically, residues 23-99 are mitochondrial matrix; it reads AHGSVVKSED…FAEMNRGTNE (77 aa). An N6-acetyllysine; alternate modification is found at Lys-29. Position 29 is an N6-succinyllysine; alternate (Lys-29). 2 positions are modified to phosphoserine: Ser-56 and Ser-58. An N6-acetyllysine; alternate modification is found at Lys-60. Lys-60 carries the post-translational modification N6-succinyllysine; alternate. Lys-67 bears the N6-acetyllysine mark. A helical transmembrane segment spans residues 100 to 125; it reads WKTVVGMAMFFIGFTALVLIWEKSYV. Residues 126–169 are Mitochondrial intermembrane-facing; sequence YGPIPHTFDRDWVAMQTKRMLDMKANPIQGFSAKWDYDKNEWKK.

It belongs to the cytochrome c oxidase IV family. In terms of assembly, component of the cytochrome c oxidase (complex IV, CIV), a multisubunit enzyme composed of 14 subunits. The complex is composed of a catalytic core of 3 subunits MT-CO1, MT-CO2 and MT-CO3, encoded in the mitochondrial DNA, and 11 supernumerary subunits COX4I, COX5A, COX5B, COX6A, COX6B, COX6C, COX7A, COX7B, COX7C, COX8 and NDUFA4, which are encoded in the nuclear genome. The complex exists as a monomer or a dimer and forms supercomplexes (SCs) in the inner mitochondrial membrane with NADH-ubiquinone oxidoreductase (complex I, CI) and ubiquinol-cytochrome c oxidoreductase (cytochrome b-c1 complex, complex III, CIII), resulting in different assemblies (supercomplex SCI(1)III(2)IV(1) and megacomplex MCI(2)III(2)IV(2)). Interacts with PHB2; the interaction decreases in absence of SPHK2. Interacts with AFG1L. Interacts with ABCB7; this interaction allows the regulation of cellular iron homeostasis and cellular reactive oxygen species (ROS) levels in cardiomyocytes. Interacts with FLVCR2; this interaction occurs in the absence of heme and is disrupted upon heme binding. Interacts with IRGC.

The protein localises to the mitochondrion inner membrane. Its pathway is energy metabolism; oxidative phosphorylation. Component of the cytochrome c oxidase, the last enzyme in the mitochondrial electron transport chain which drives oxidative phosphorylation. The respiratory chain contains 3 multisubunit complexes succinate dehydrogenase (complex II, CII), ubiquinol-cytochrome c oxidoreductase (cytochrome b-c1 complex, complex III, CIII) and cytochrome c oxidase (complex IV, CIV), that cooperate to transfer electrons derived from NADH and succinate to molecular oxygen, creating an electrochemical gradient over the inner membrane that drives transmembrane transport and the ATP synthase. Cytochrome c oxidase is the component of the respiratory chain that catalyzes the reduction of oxygen to water. Electrons originating from reduced cytochrome c in the intermembrane space (IMS) are transferred via the dinuclear copper A center (CU(A)) of subunit 2 and heme A of subunit 1 to the active site in subunit 1, a binuclear center (BNC) formed by heme A3 and copper B (CU(B)). The BNC reduces molecular oxygen to 2 water molecules using 4 electrons from cytochrome c in the IMS and 4 protons from the mitochondrial matrix. The sequence is that of Cytochrome c oxidase subunit 4 isoform 1, mitochondrial (Cox4i1) from Mus musculus (Mouse).